A 368-amino-acid chain; its full sequence is Histone macroH2A1.1 (368 aa).

The interval 154-177 is disordered; it reads AVSSSSAAASSSSSASSSSSVAPK. The 185-residue stretch at 184–368 folds into the Macro domain; it reads TILSKKTLHL…VYNAELINTN (185 aa). A glycoprotein contacts are provided by aspartate 203, leucine 204, glutamine 225, valine 226, serine 275, glycine 313, serine 314, glycine 315, asparagine 316, and asparagine 317.

This sequence belongs to the histone H2A family. In terms of assembly, the nucleosome is a histone octamer containing two molecules each of H2A, H2B, H3 and H4 assembled in one H3-H4 heterotetramer and two H2A-H2B heterodimers.

It localises to the nucleus. The protein resides in the chromosome. In terms of biological role, variant histone H2A which replaces conventional H2A in a subset of nucleosomes where it represses transcription. Nucleosomes wrap and compact DNA into chromatin, limiting DNA accessibility to the cellular machineries which require DNA as a template. Histones thereby play a central role in transcription regulation, DNA repair, DNA replication and chromosomal stability. DNA accessibility is regulated via a complex set of post-translational modifications of histones, also called histone code, and nucleosome remodeling. Its function is as follows. Specifically binds poly-ADP-ribose and plays a key role in NAD(+) metabolism. Able to bind to the ends of poly-ADP-ribose chains created by PARP1 and cap them. This prevents PARP1 from further addition of ADP-ribose and thus limits the consumption of nuclear NAD(+), allowing the cell to maintain proper NAD(+) levels in both the nucleus and the mitochondria to promote proper mitochondrial respiration. The protein is Histone macroH2A1.1 of Capsaspora owczarzaki (strain ATCC 30864).